A 207-amino-acid chain; its full sequence is Hydrogenase expression/formation protein HoxM (207 aa).

Ni(2+)-binding residues include E19, D65, and H96.

This sequence belongs to the peptidase A31 family.

Functionally, not known. Could be involved in the processing of hydrogenase. In Azotobacter vinelandii, this protein is Hydrogenase expression/formation protein HoxM (hoxM).